A 361-amino-acid chain; its full sequence is Phospho-N-acetylmuramoyl-pentapeptide-transferase (361 aa).

10 consecutive transmembrane segments (helical) span residues 28 to 48 (LAII…IKFL), 74 to 94 (TMGG…LADL), 99 to 119 (IWIT…DDYA), 133 to 153 (SKLL…EYTD), 168 to 188 (LSLD…VGSS), 203 to 223 (VPIA…GNLI), 236 to 256 (TGEL…FLWF), 263 to 283 (VFMG…ISVI), 288 to 308 (VVLS…ILQV), and 338 to 358 (KVVI…LSSL).

It belongs to the glycosyltransferase 4 family. MraY subfamily. It depends on Mg(2+) as a cofactor.

It localises to the cell inner membrane. It catalyses the reaction UDP-N-acetyl-alpha-D-muramoyl-L-alanyl-gamma-D-glutamyl-meso-2,6-diaminopimeloyl-D-alanyl-D-alanine + di-trans,octa-cis-undecaprenyl phosphate = di-trans,octa-cis-undecaprenyl diphospho-N-acetyl-alpha-D-muramoyl-L-alanyl-D-glutamyl-meso-2,6-diaminopimeloyl-D-alanyl-D-alanine + UMP. It functions in the pathway cell wall biogenesis; peptidoglycan biosynthesis. Functionally, catalyzes the initial step of the lipid cycle reactions in the biosynthesis of the cell wall peptidoglycan: transfers peptidoglycan precursor phospho-MurNAc-pentapeptide from UDP-MurNAc-pentapeptide onto the lipid carrier undecaprenyl phosphate, yielding undecaprenyl-pyrophosphoryl-MurNAc-pentapeptide, known as lipid I. This chain is Phospho-N-acetylmuramoyl-pentapeptide-transferase, found in Rickettsia canadensis (strain McKiel).